A 428-amino-acid polypeptide reads, in one-letter code: tRNA(Ile)-lysidine synthase (428 aa).

ATP is bound at residue 28 to 33 (SGGVDS).

This sequence belongs to the tRNA(Ile)-lysidine synthase family.

Its subcellular location is the cytoplasm. The enzyme catalyses cytidine(34) in tRNA(Ile2) + L-lysine + ATP = lysidine(34) in tRNA(Ile2) + AMP + diphosphate + H(+). Its function is as follows. Ligates lysine onto the cytidine present at position 34 of the AUA codon-specific tRNA(Ile) that contains the anticodon CAU, in an ATP-dependent manner. Cytidine is converted to lysidine, thus changing the amino acid specificity of the tRNA from methionine to isoleucine. The polypeptide is tRNA(Ile)-lysidine synthase (Streptococcus pyogenes serotype M18 (strain MGAS8232)).